Reading from the N-terminus, the 447-residue chain is Tubulin beta chain (447 aa).

Gln-11, Glu-69, Ser-138, Gly-142, Thr-143, Gly-144, Asn-204, and Asn-226 together coordinate GTP. Glu-69 is a binding site for Mg(2+). Residues Gln-424–Glu-447 form a disordered region. Positions Glu-432 to Glu-447 are enriched in acidic residues.

The protein belongs to the tubulin family. Dimer of alpha and beta chains. A typical microtubule is a hollow water-filled tube with an outer diameter of 25 nm and an inner diameter of 15 nM. Alpha-beta heterodimers associate head-to-tail to form protofilaments running lengthwise along the microtubule wall with the beta-tubulin subunit facing the microtubule plus end conferring a structural polarity. Microtubules usually have 13 protofilaments but different protofilament numbers can be found in some organisms and specialized cells. Mg(2+) serves as cofactor.

The protein localises to the cytoplasm. Its subcellular location is the cytoskeleton. Its function is as follows. Tubulin is the major constituent of microtubules, a cylinder consisting of laterally associated linear protofilaments composed of alpha- and beta-tubulin heterodimers. Microtubules grow by the addition of GTP-tubulin dimers to the microtubule end, where a stabilizing cap forms. Below the cap, tubulin dimers are in GDP-bound state, owing to GTPase activity of alpha-tubulin. The polypeptide is Tubulin beta chain (TUB1) (Cercospora beticola (Sugarbeet leaf spot fungus)).